A 146-amino-acid chain; its full sequence is 3-dehydroquinate dehydratase (146 aa).

The Proton acceptor role is filled by Y23. Residues N74, H80, and D87 each coordinate substrate. H100 acts as the Proton donor in catalysis. Substrate is bound by residues 101–102 and R111; that span reads IS.

Belongs to the type-II 3-dehydroquinase family. In terms of assembly, homododecamer.

It catalyses the reaction 3-dehydroquinate = 3-dehydroshikimate + H2O. Its pathway is metabolic intermediate biosynthesis; chorismate biosynthesis; chorismate from D-erythrose 4-phosphate and phosphoenolpyruvate: step 3/7. Its function is as follows. Catalyzes a trans-dehydration via an enolate intermediate. In Bacillus cytotoxicus (strain DSM 22905 / CIP 110041 / 391-98 / NVH 391-98), this protein is 3-dehydroquinate dehydratase.